We begin with the raw amino-acid sequence, 207 residues long: Chaperone protein TorD (207 aa).

It belongs to the TorD/DmsD family. TorD subfamily.

It is found in the cytoplasm. Involved in the biogenesis of TorA. Acts on TorA before the insertion of the molybdenum cofactor and, as a result, probably favors a conformation of the apoenzyme that is competent for acquiring the cofactor. The sequence is that of Chaperone protein TorD from Aggregatibacter aphrophilus (strain NJ8700) (Haemophilus aphrophilus).